Reading from the N-terminus, the 640-residue chain is Chaperone protein HtpG (640 aa).

Residues 1-343 form an a; substrate-binding region; the sequence is MQTAENVEHL…SNDLPLNVSR (343 aa). The b stretch occupies residues 344-564; it reads EILQESKDID…THDMSGNLGR (221 aa). The c stretch occupies residues 565–640; it reads LLKSAGQKVP…LLLQNILSGK (76 aa).

It belongs to the heat shock protein 90 family. As to quaternary structure, homodimer.

The protein resides in the cytoplasm. Molecular chaperone. Has ATPase activity. This Nitrosomonas eutropha (strain DSM 101675 / C91 / Nm57) protein is Chaperone protein HtpG.